Reading from the N-terminus, the 217-residue chain is UPF0502 protein VF_A0604 (217 aa).

This sequence belongs to the UPF0502 family.

This chain is UPF0502 protein VF_A0604, found in Aliivibrio fischeri (strain ATCC 700601 / ES114) (Vibrio fischeri).